A 132-amino-acid chain; its full sequence is Small ribosomal subunit protein uS9 (132 aa).

Positions 100-132 (LKSNGLLTRDDRTKERKKPGLKRARKAPQYTKR) are disordered. Residues 114-132 (ERKKPGLKRARKAPQYTKR) are compositionally biased toward basic residues.

The protein belongs to the universal ribosomal protein uS9 family.

This Dehalococcoides mccartyi (strain ATCC BAA-2100 / JCM 16839 / KCTC 5957 / BAV1) protein is Small ribosomal subunit protein uS9.